We begin with the raw amino-acid sequence, 191 residues long: Potassium-transporting ATPase KdpC subunit (191 aa).

Residues 6–26 (PALVLFILLTLLTGGVYPLLT) traverse the membrane as a helical segment.

Belongs to the KdpC family. As to quaternary structure, the system is composed of three essential subunits: KdpA, KdpB and KdpC.

Its subcellular location is the cell inner membrane. In terms of biological role, part of the high-affinity ATP-driven potassium transport (or Kdp) system, which catalyzes the hydrolysis of ATP coupled with the electrogenic transport of potassium into the cytoplasm. This subunit acts as a catalytic chaperone that increases the ATP-binding affinity of the ATP-hydrolyzing subunit KdpB by the formation of a transient KdpB/KdpC/ATP ternary complex. The polypeptide is Potassium-transporting ATPase KdpC subunit (Klebsiella pneumoniae (strain 342)).